A 287-amino-acid chain; its full sequence is Phosphatidylglycerol--prolipoprotein diacylglyceryl transferase (287 aa).

4 consecutive transmembrane segments (helical) span residues 26 to 46 (VAIR…WWLA), 71 to 91 (FLVW…ILFY), 106 to 126 (IWRG…AMIV), and 132 to 152 (GLPV…GLFF). Arginine 154 lines the a 1,2-diacyl-sn-glycero-3-phospho-(1'-sn-glycerol) pocket. 3 helical membrane passes run 187–207 (SQLY…QVLA), 217–237 (GVIS…VEFF), and 251–271 (WLTM…WAIW).

This sequence belongs to the Lgt family.

Its subcellular location is the cell inner membrane. It carries out the reaction L-cysteinyl-[prolipoprotein] + a 1,2-diacyl-sn-glycero-3-phospho-(1'-sn-glycerol) = an S-1,2-diacyl-sn-glyceryl-L-cysteinyl-[prolipoprotein] + sn-glycerol 1-phosphate + H(+). It participates in protein modification; lipoprotein biosynthesis (diacylglyceryl transfer). Functionally, catalyzes the transfer of the diacylglyceryl group from phosphatidylglycerol to the sulfhydryl group of the N-terminal cysteine of a prolipoprotein, the first step in the formation of mature lipoproteins. This Allorhizobium ampelinum (strain ATCC BAA-846 / DSM 112012 / S4) (Agrobacterium vitis (strain S4)) protein is Phosphatidylglycerol--prolipoprotein diacylglyceryl transferase.